The chain runs to 1257 residues: Period circadian protein homolog 2 (1257 aa).

Residues 1–60 are disordered; that stretch reads MNGYVDFSPSPTSPTKEPGAPQPTQAVLQEDVDMSSGSSGNENCSTGRDSQGSDCDDNGK. Residues 35–53 show a composition bias toward polar residues; it reads SSGSSGNENCSTGRDSQGS. Positions 109-118 match the Nuclear export signal 1 motif; that stretch reads LIRTLKELKV. Residues 179-246 enclose the PAS 1 domain; it reads ITSEYIVKNA…FHSYTTPYKL (68 aa). The short motif at 306 to 310 is the LXXLL element; sequence LCCLL. The region spanning 319-385 is the PAS 2 domain; sequence YEAPRIPPEK…MLAIHKKILQ (67 aa). In terms of domain architecture, PAC spans 393–436; it reads YSPIRFRTRNGEYITLDTSWSSFINPWSRKISFIIGRHKVRVGP. The short motif at 460 to 469 is the Nuclear export signal 2 element; the sequence is LTEQIHRLLM. Disordered regions lie at residues 471–565 and 617–638; these read PVPH…GASL and PSRK…PSKV. Residues 478 to 482 are important for protein stability; the sequence is SGYGS. Positions 493-504 are enriched in polar residues; that stretch reads MSQTSSSDSNGQ. The interval 510–709 is CSNK1E binding domain; it reads RRSGIFKTSG…GAAGGLSQEK (200 aa). Residues S525, S528, S531, S538, and S544 each carry the phosphoserine modification. T554 carries the phosphothreonine modification. S659, S693, S697, S706, S758, and S763 each carry phosphoserine. Residues 757–832 are disordered; the sequence is RSRAQASDRG…SDTSQSSCPS (76 aa). The short motif at 778-794 is the Nuclear localization signal element; the sequence is KKTGKNRKLKSKRVKTR. Basic residues predominate over residues 779–792; it reads KTGKNRKLKSKRVK. Low complexity predominate over residues 821-832; it reads SPSDTSQSSCPS. T858 is modified (phosphothreonine). Residues 882–1067 are interaction with PPARG; that stretch reads EFAVQPLPFA…DLCSATGSAL (186 aa). At S939 the chain carries Phosphoserine. T964 bears the Phosphothreonine mark. Position 971 is a phosphoserine (S971). A Nuclear export signal 3 motif is present at residues 983-990; the sequence is LQLNLLQL. The disordered stretch occupies residues 994–1044; sequence PEGSTGAAGTLGTTGTAASGLDCTSGTSRDRQPKAPPTCNEPSDTQNSDAI. The span at 996 to 1014 shows a compositional bias: low complexity; the sequence is GSTGAAGTLGTTGTAASGL. The segment covering 1033-1044 has biased composition (polar residues); that stretch reads NEPSDTQNSDAI. The LXXLL signature appears at 1051 to 1055; it reads LNLLL. Positions 1070 to 1092 are enriched in low complexity; the sequence is SGASATSDSLGSSSLGFGTSQSG. A disordered region spans residues 1070-1115; the sequence is SGASATSDSLGSSSLGFGTSQSGAGSSDTSHTSKYFGSIDSSENNH. A compositionally biased stretch (polar residues) spans 1093-1111; that stretch reads AGSSDTSHTSKYFGSIDSS. The residue at position 1126 (S1126) is a Phosphoserine. A CRY binding domain region spans residues 1157–1257; it reads SRDLQAVLKE…LTGPRIEAQT (101 aa). The tract at residues 1224–1257 is disordered; that stretch reads PYEEDSPSPGLCDTSEAKEEEGEQLTGPRIEAQT.

As to quaternary structure, homodimer. Component of the circadian core oscillator, which includes the CRY proteins, CLOCK or NPAS2, BMAL1 or BMAL2, CSNK1D and/or CSNK1E, TIMELESS, and the PER proteins. Interacts with CLOCK-BMAL1 (off DNA). Interacts with BMAL2. Interacts directly with PER1 and PER3, and through a C-terminal domain, with CRY1 and CRY2. Interacts (via PAS 2 domain) with TIMELESS. Interacts with NFIL3. Different large complexes have been identified with different repressive functions. The core of PER complexes is composed of at least PER1, PER2, PER3, CRY1, CRY2, CSNK1D and/or CSNK1E. The large PER complex involved in the repression of transcriptional termination is composed of at least PER2, CDK9, DDX5, DHX9, NCBP1 and POLR2A (active). The large PER complex involved in the histone deacetylation is composed of at least HDAC1, PER2, SFPQ and SIN3A. The large PER complex involved in the histone methylation is composed of at least PER2, CBX3, TRIM28, SUV39H1 and/or SUV39H2; CBX3 mediates the formation of the complex. Interacts with SETX; the interaction inhibits termination of circadian target genes. Interacts with the nuclear receptors HNF4A, NR1D1, NR4A2, RORA, PPARA, PPARG and THRA; the interaction with at least PPARG is ligand dependent. Interacts with PML. Interacts (phosphorylated) with BTRC and FBXW11; the interactions trigger proteasomal degradation. Interacts with NONO and SFPQ. Interacts with CAVIN3. Interacts with MAGEL2. Interacts with MAP1LC3B. Interacts with HNF4A. Post-translationally, acetylated. Deacetylated by SIRT1, resulting in decreased protein stability. Deacetylated by SIRT6, preventing its degradation by the proteasome, resulting in increased protein stability. In terms of processing, phosphorylated by CSNK1E and CSNK1D. Phosphorylation results in PER2 protein degradation. May be dephosphorylated by PP1. Ubiquitinated, leading to its proteasomal degradation. Ubiquitination may be inhibited by CRY1. As to expression, in the brain, high expression in SCN during the subjective day. Constitutive expression in the cornu ammonis and in the dentate gyrus of the hippocampus. Also expressed in the piriform cortex and the glomeruli of the olfactory bulb, and at a lower extent in the cerebral cortex. Not expressed in the pars tuberalis and the Purkinje neurons. Also expressed in adipose tissue (white and brown), heart, kidney, bladder, lumbar spinal cord, skeletal muscle, spleen, lung, pancreas and liver with highest levels in skeletal muscle and liver and lowest levels in spleen.

Its subcellular location is the nucleus. It localises to the cytoplasm. It is found in the perinuclear region. Transcriptional repressor which forms a core component of the circadian clock. The circadian clock, an internal time-keeping system, regulates various physiological processes through the generation of approximately 24 hour circadian rhythms in gene expression, which are translated into rhythms in metabolism and behavior. It is derived from the Latin roots 'circa' (about) and 'diem' (day) and acts as an important regulator of a wide array of physiological functions including metabolism, sleep, body temperature, blood pressure, endocrine, immune, cardiovascular, and renal function. Consists of two major components: the central clock, residing in the suprachiasmatic nucleus (SCN) of the brain, and the peripheral clocks that are present in nearly every tissue and organ system. Both the central and peripheral clocks can be reset by environmental cues, also known as Zeitgebers (German for 'timegivers'). The predominant Zeitgeber for the central clock is light, which is sensed by retina and signals directly to the SCN. The central clock entrains the peripheral clocks through neuronal and hormonal signals, body temperature and feeding-related cues, aligning all clocks with the external light/dark cycle. Circadian rhythms allow an organism to achieve temporal homeostasis with its environment at the molecular level by regulating gene expression to create a peak of protein expression once every 24 hours to control when a particular physiological process is most active with respect to the solar day. Transcription and translation of core clock components (CLOCK, NPAS2, BMAL1, BMAL2, PER1, PER2, PER3, CRY1 and CRY2) plays a critical role in rhythm generation, whereas delays imposed by post-translational modifications (PTMs) are important for determining the period (tau) of the rhythms (tau refers to the period of a rhythm and is the length, in time, of one complete cycle). A diurnal rhythm is synchronized with the day/night cycle, while the ultradian and infradian rhythms have a period shorter and longer than 24 hours, respectively. Disruptions in the circadian rhythms contribute to the pathology of cardiovascular diseases, cancer, metabolic syndrome and aging. A transcription/translation feedback loop (TTFL) forms the core of the molecular circadian clock mechanism. Transcription factors, CLOCK or NPAS2 and BMAL1 or BMAL2, form the positive limb of the feedback loop, act in the form of a heterodimer and activate the transcription of core clock genes and clock-controlled genes (involved in key metabolic processes), harboring E-box elements (5'-CACGTG-3') within their promoters. The core clock genes: PER1/2/3 and CRY1/2 which are transcriptional repressors form the negative limb of the feedback loop and interact with the CLOCK|NPAS2-BMAL1|BMAL2 heterodimer inhibiting its activity and thereby negatively regulating their own expression. This heterodimer also activates nuclear receptors NR1D1/2 and RORA/B/G, which form a second feedback loop and which activate and repress BMAL1 transcription, respectively. PER1 and PER2 proteins transport CRY1 and CRY2 into the nucleus with appropriate circadian timing, but also contribute directly to repression of clock-controlled target genes through interaction with several classes of RNA-binding proteins, helicases and others transcriptional repressors. PER appears to regulate circadian control of transcription by at least three different modes. First, interacts directly with the CLOCK-BMAL1 at the tail end of the nascent transcript peak to recruit complexes containing the SIN3-HDAC that remodel chromatin to repress transcription. Second, brings H3K9 methyltransferases such as SUV39H1 and SUV39H2 to the E-box elements of the circadian target genes, like PER2 itself or PER1. The recruitment of each repressive modifier to the DNA seems to be very precisely temporally orchestrated by the large PER complex, the deacetylases acting before than the methyltransferases. Additionally, large PER complexes are also recruited to the target genes 3' termination site through interactions with RNA-binding proteins and helicases that may play a role in transcription termination to regulate transcription independently of CLOCK-BMAL1 interactions. Recruitment of large PER complexes to the elongating polymerase at PER and CRY termination sites inhibited SETX action, impeding RNA polymerase II release and thereby repressing transcriptional reinitiation. May propagate clock information to metabolic pathways via the interaction with nuclear receptors. Coactivator of PPARA and corepressor of NR1D1, binds rhythmically at the promoter of nuclear receptors target genes like BMAL1 or G6PC1. Directly and specifically represses PPARG proadipogenic activity by blocking PPARG recruitment to target promoters and thereby transcriptional activation. Required for fatty acid and lipid metabolism, is involved as well in the regulation of circulating insulin levels. Plays an important role in the maintenance of cardiovascular functions through the regulation of NO and vasodilatatory prostaglandins production in aortas. Controls circadian glutamate uptake in synaptic vesicles through the regulation of VGLUT1 expression. May also be involved in the regulation of inflammatory processes. Represses the CLOCK-BMAL1 induced transcription of BHLHE40/DEC1 and ATF4. Negatively regulates the formation of the TIMELESS-CRY1 complex by competing with TIMELESS for binding to CRY1. In Mus musculus (Mouse), this protein is Period circadian protein homolog 2 (Per2).